The chain runs to 426 residues: Histidine--tRNA ligase (426 aa).

This sequence belongs to the class-II aminoacyl-tRNA synthetase family. As to quaternary structure, homodimer.

The protein resides in the cytoplasm. The catalysed reaction is tRNA(His) + L-histidine + ATP = L-histidyl-tRNA(His) + AMP + diphosphate + H(+). The chain is Histidine--tRNA ligase from Legionella pneumophila subsp. pneumophila (strain Philadelphia 1 / ATCC 33152 / DSM 7513).